The sequence spans 289 residues: Protoheme IX farnesyltransferase 2 (289 aa).

9 consecutive transmembrane segments (helical) span residues 4-24 (PGIIFGNLISVAGGFLLAAKG), 28-48 (LVLMLASLVGLSLVVASGCAI), 66-86 (RVTVTGEIAVGNVLAFGLALG), 99-118 (ALALLFAVIGYIVYVGVYSL), 124-144 (SVYGTLVGSFSGAVPPVVGYC), 155-175 (AILLLMFSLWQMPHSYAIAIF), 199-219 (LHIVLYIAVFALVSALLPLAG), 221-241 (TGIAFMAVTCATSLWWLAMAL), and 256-276 (QVFGFSIITITALSVTMALDF).

It belongs to the UbiA prenyltransferase family. Protoheme IX farnesyltransferase subfamily.

Its subcellular location is the cell inner membrane. The catalysed reaction is heme b + (2E,6E)-farnesyl diphosphate + H2O = Fe(II)-heme o + diphosphate. It participates in porphyrin-containing compound metabolism; heme O biosynthesis; heme O from protoheme: step 1/1. Functionally, converts heme B (protoheme IX) to heme O by substitution of the vinyl group on carbon 2 of heme B porphyrin ring with a hydroxyethyl farnesyl side group. The protein is Protoheme IX farnesyltransferase 2 of Shewanella baltica (strain OS195).